Here is a 444-residue protein sequence, read N- to C-terminus: Phosphoglucosamine mutase (444 aa).

The Phosphoserine intermediate role is filled by S103. Residues S103, D242, D244, and D246 each contribute to the Mg(2+) site. Residue S103 is modified to Phosphoserine.

It belongs to the phosphohexose mutase family. Requires Mg(2+) as cofactor. Post-translationally, activated by phosphorylation.

It catalyses the reaction alpha-D-glucosamine 1-phosphate = D-glucosamine 6-phosphate. Functionally, catalyzes the conversion of glucosamine-6-phosphate to glucosamine-1-phosphate. This chain is Phosphoglucosamine mutase, found in Hydrogenovibrio crunogenus (strain DSM 25203 / XCL-2) (Thiomicrospira crunogena).